The primary structure comprises 297 residues: Bifunctional protein FolD 1 (297 aa).

NADP(+) contacts are provided by residues 164 to 166, Ser193, and Ile234; that span reads GRS.

The protein belongs to the tetrahydrofolate dehydrogenase/cyclohydrolase family. As to quaternary structure, homodimer.

It carries out the reaction (6R)-5,10-methylene-5,6,7,8-tetrahydrofolate + NADP(+) = (6R)-5,10-methenyltetrahydrofolate + NADPH. It catalyses the reaction (6R)-5,10-methenyltetrahydrofolate + H2O = (6R)-10-formyltetrahydrofolate + H(+). Its pathway is one-carbon metabolism; tetrahydrofolate interconversion. Functionally, catalyzes the oxidation of 5,10-methylenetetrahydrofolate to 5,10-methenyltetrahydrofolate and then the hydrolysis of 5,10-methenyltetrahydrofolate to 10-formyltetrahydrofolate. This chain is Bifunctional protein FolD 1, found in Haloarcula marismortui (strain ATCC 43049 / DSM 3752 / JCM 8966 / VKM B-1809) (Halobacterium marismortui).